The following is a 160-amino-acid chain: Putative pre-16S rRNA nuclease (160 aa).

It belongs to the YqgF nuclease family.

It is found in the cytoplasm. Its function is as follows. Could be a nuclease involved in processing of the 5'-end of pre-16S rRNA. This chain is Putative pre-16S rRNA nuclease, found in Gluconobacter oxydans (strain 621H) (Gluconobacter suboxydans).